The chain runs to 342 residues: MENILDFTLEELKEWLISKEEKAFRAKQVFDWIYNKLIFDFNNMKNIPYKTKNLLSDNFYIGVPKVVKKLMSQDKNTYKFLFEYNDGNIIESVVMKYKHGNSICVSTQVGCRMGCKFCASTLDGVIRNLTSGEILSQIMAAQKEIGERISNVVLMGSGEPLDNFKNVTEFLDLVTSDTTLNIGQRHITLSTCGIVPKIKELADKNYNITLAISLHSPEDLLRKEMMPIANKYSIKELMEACDYYINKTNRRITFEYALVKGKNDSIKEAKKLSTVLKGKLCHVNLIPVNEIKENSYEKSTLKNIESFGNILKENGIETTIRREMGADINAACGQLRRSYVSK.

Residue glutamate 91 is the Proton acceptor of the active site. The 231-residue stretch at 97 to 327 (YKHGNSICVS…TTIRREMGAD (231 aa)) folds into the Radical SAM core domain. An intrachain disulfide couples cysteine 104 to cysteine 332. Cysteine 111, cysteine 115, and cysteine 118 together coordinate [4Fe-4S] cluster. Residues 158-159 (GE), serine 190, 213-215 (SLH), and asparagine 289 each bind S-adenosyl-L-methionine. Cysteine 332 functions as the S-methylcysteine intermediate in the catalytic mechanism.

Belongs to the radical SAM superfamily. RlmN family. [4Fe-4S] cluster serves as cofactor.

It is found in the cytoplasm. It carries out the reaction adenosine(2503) in 23S rRNA + 2 reduced [2Fe-2S]-[ferredoxin] + 2 S-adenosyl-L-methionine = 2-methyladenosine(2503) in 23S rRNA + 5'-deoxyadenosine + L-methionine + 2 oxidized [2Fe-2S]-[ferredoxin] + S-adenosyl-L-homocysteine. The catalysed reaction is adenosine(37) in tRNA + 2 reduced [2Fe-2S]-[ferredoxin] + 2 S-adenosyl-L-methionine = 2-methyladenosine(37) in tRNA + 5'-deoxyadenosine + L-methionine + 2 oxidized [2Fe-2S]-[ferredoxin] + S-adenosyl-L-homocysteine. Specifically methylates position 2 of adenine 2503 in 23S rRNA and position 2 of adenine 37 in tRNAs. The polypeptide is Probable dual-specificity RNA methyltransferase RlmN (Clostridium botulinum (strain Loch Maree / Type A3)).